The following is a 358-amino-acid chain: Putative purine permease 12 (358 aa).

The next 10 membrane-spanning stretches (helical) occupy residues 29–49 (WILV…SVLL), 62–82 (WIST…LSLL), 100–120 (LVWI…LYSV), 128–148 (STYS…YYYI), 153–173 (ITCL…LVSL), 189–209 (LIGC…LSLM), 235–255 (VASC…LLSV), 280–299 (LGCV…FSNL), 300–316 (ISTL…IAVF), and 320–340 (LTEV…FYIY).

Belongs to the purine permeases (TC 2.A.7.14) family.

It localises to the membrane. The chain is Putative purine permease 12 (PUP12) from Arabidopsis thaliana (Mouse-ear cress).